The primary structure comprises 154 residues: Large ribosomal subunit protein eL24 (154 aa).

The interval 92 to 154 (AKRNQKPEVR…AAAPRVGGKR (63 aa)) is disordered. Basic and acidic residues predominate over residues 96 to 122 (QKPEVRKAQREQAVKAAKEKKKADQVG). A compositionally biased stretch (low complexity) spans 129–154 (KARATAPKTKAPKTVKAAAPRVGGKR).

It belongs to the eukaryotic ribosomal protein eL24 family.

This Branchiostoma belcheri (Amphioxus) protein is Large ribosomal subunit protein eL24 (RPL24).